The sequence spans 176 residues: Putative phosphohydrolase YueE (176 aa).

Positions Gly-23–Glu-139 constitute an HD domain.

This chain is Putative phosphohydrolase YueE (yueE), found in Bacillus subtilis (strain 168).